A 220-amino-acid chain; its full sequence is Octanoyltransferase (220 aa).

A BPL/LPL catalytic domain is found at 31–217; it reads ENTPDEIWLV…HFAEILGYNA (187 aa). Substrate-binding positions include 70 to 77, 146 to 148, and 159 to 161; these read RGGQITYH, SLG, and GLA. The Acyl-thioester intermediate role is filled by Cys177.

Belongs to the LipB family.

The protein resides in the cytoplasm. It catalyses the reaction octanoyl-[ACP] + L-lysyl-[protein] = N(6)-octanoyl-L-lysyl-[protein] + holo-[ACP] + H(+). It functions in the pathway protein modification; protein lipoylation via endogenous pathway; protein N(6)-(lipoyl)lysine from octanoyl-[acyl-carrier-protein]: step 1/2. Catalyzes the transfer of endogenously produced octanoic acid from octanoyl-acyl-carrier-protein onto the lipoyl domains of lipoate-dependent enzymes. Lipoyl-ACP can also act as a substrate although octanoyl-ACP is likely to be the physiological substrate. The chain is Octanoyltransferase from Actinobacillus succinogenes (strain ATCC 55618 / DSM 22257 / CCUG 43843 / 130Z).